Consider the following 530-residue polypeptide: Calcium-dependent protein kinase 14 (530 aa).

The N-myristoyl glycine moiety is linked to residue Gly2. Residues 54 to 312 enclose the Protein kinase domain; it reads YKLGRELGRG…AQQVLDHPWI (259 aa). ATP-binding positions include 60 to 68 and Lys83; that span reads LGRGEFGVT. The active-site Proton acceptor is the Asp178. Ser218 bears the Phosphoserine mark. The autoinhibitory domain stretch occupies residues 318–348; sequence ASNVSLGETVRARLKQFSVMNKLKKRALRVI. EF-hand domains are found at residues 355–390, 391–426, 427–462, and 463–498; these read EETS…LGIV, VPQD…IRKL, GNDE…DVDT, and TSEE…GTDW. Ca(2+) contacts are provided by Asp368, Ser370, Lys374, Glu379, Asp404, Asp406, Asp408, Tyr410, Glu415, Asp440, Asn442, Ser444, Tyr446, Glu451, Asp476, Asn478, Asp480, and Lys482. A Phosphoserine modification is found at Ser484. Glu487 is a Ca(2+) binding site.

It belongs to the protein kinase superfamily. Ser/Thr protein kinase family. CDPK subfamily.

The protein localises to the membrane. It carries out the reaction L-seryl-[protein] + ATP = O-phospho-L-seryl-[protein] + ADP + H(+). It catalyses the reaction L-threonyl-[protein] + ATP = O-phospho-L-threonyl-[protein] + ADP + H(+). Its activity is regulated as follows. Activated by calcium. Autophosphorylation may play an important role in the regulation of the kinase activity. May play a role in signal transduction pathways that involve calcium as a second messenger. This is Calcium-dependent protein kinase 14 (CPK14) from Arabidopsis thaliana (Mouse-ear cress).